A 376-amino-acid chain; its full sequence is Chaperone protein DnaJ (376 aa).

In terms of domain architecture, J spans 5 to 70; it reads DYYEVLGAAK…QKRAAYDQFG (66 aa). The CR-type zinc finger occupies 134-212; the sequence is GCDEKIRIPT…CGGQGRVQNT (79 aa). Positions 147, 150, 164, 167, 186, 189, 200, and 203 each coordinate Zn(2+). 4 CXXCXGXG motif repeats span residues 147-154, 164-171, 186-193, and 200-207; these read CDVCHGSG, CTTCGGVG, CPTCKGEG, and CGNCGGQG.

It belongs to the DnaJ family. Homodimer. It depends on Zn(2+) as a cofactor.

Its subcellular location is the cytoplasm. Its function is as follows. Participates actively in the response to hyperosmotic and heat shock by preventing the aggregation of stress-denatured proteins and by disaggregating proteins, also in an autonomous, DnaK-independent fashion. Unfolded proteins bind initially to DnaJ; upon interaction with the DnaJ-bound protein, DnaK hydrolyzes its bound ATP, resulting in the formation of a stable complex. GrpE releases ADP from DnaK; ATP binding to DnaK triggers the release of the substrate protein, thus completing the reaction cycle. Several rounds of ATP-dependent interactions between DnaJ, DnaK and GrpE are required for fully efficient folding. Also involved, together with DnaK and GrpE, in the DNA replication of plasmids through activation of initiation proteins. The chain is Chaperone protein DnaJ from Alcanivorax borkumensis (strain ATCC 700651 / DSM 11573 / NCIMB 13689 / SK2).